We begin with the raw amino-acid sequence, 129 residues long: Small ribosomal subunit protein uS9 (129 aa).

It belongs to the universal ribosomal protein uS9 family.

The chain is Small ribosomal subunit protein uS9 (rpsI) from Treponema pallidum (strain Nichols).